Consider the following 313-residue polypeptide: Cytochrome c biogenesis protein CcsA (313 aa).

The next 8 helical transmembrane spans lie at 9–29 (ILTH…LITF), 44–64 (GIIV…VSSG), 71–91 (LYES…IPYF), 111–131 (GFAT…VPAL), 143–163 (MILG…LLVI), 217–237 (VISL…VWAN), 244–264 (WNWD…AIYL), and 278–298 (AIVA…VNLL).

This sequence belongs to the CcmF/CycK/Ccl1/NrfE/CcsA family. As to quaternary structure, may interact with Ccs1.

Its subcellular location is the plastid. The protein localises to the chloroplast thylakoid membrane. Required during biogenesis of c-type cytochromes (cytochrome c6 and cytochrome f) at the step of heme attachment. The polypeptide is Cytochrome c biogenesis protein CcsA (Solanum lycopersicum (Tomato)).